We begin with the raw amino-acid sequence, 156 residues long: Ribonuclease pancreatic (156 aa).

The first 28 residues, 1–28 (MALEKSLVLLPLLVLILLVLGWVQPSLG), serve as a signal peptide directing secretion. Positions 33 to 43 (AKKFQRQHVDS) are enriched in basic and acidic residues. A disordered region spans residues 33-53 (AKKFQRQHVDSDSSPSSSSTY). Residues Lys-35 and Arg-38 each coordinate substrate. His-40 functions as the Proton acceptor in the catalytic mechanism. 4 disulfides stabilise this stretch: Cys-54/Cys-112, Cys-68/Cys-123, Cys-86/Cys-138, and Cys-93/Cys-100. An N-linked (GlcNAc...) asparagine glycan is attached at Asn-62. Substrate is bound by residues 69–73 (KPVNT) and Lys-94. Residue Asn-104 is glycosylated (N-linked (GlcNAc...) asparagine). Arg-113 provides a ligand contact to substrate. The N-linked (GlcNAc...) asparagine glycan is linked to Asn-116. His-147 serves as the catalytic Proton donor.

The protein belongs to the pancreatic ribonuclease family. Monomer. Interacts with and forms tight 1:1 complexes with RNH1. Dimerization of two such complexes may occur. Interaction with RNH1 inhibits this protein. As to expression, pancreas and other tissues and body fluids (indicating it may have other physiological functions besides its role in digestion).

The protein resides in the secreted. The enzyme catalyses an [RNA] containing cytidine + H2O = an [RNA]-3'-cytidine-3'-phosphate + a 5'-hydroxy-ribonucleotide-3'-[RNA].. It carries out the reaction an [RNA] containing uridine + H2O = an [RNA]-3'-uridine-3'-phosphate + a 5'-hydroxy-ribonucleotide-3'-[RNA].. Functionally, endonuclease that catalyzes the cleavage of RNA on the 3' side of pyrimidine nucleotides. Acts on single-stranded and double-stranded RNA. This Pan troglodytes (Chimpanzee) protein is Ribonuclease pancreatic (RNASE1).